The chain runs to 274 residues: Putative outer membrane protein CPn_1073/CP_0776/CPj1073/CpB1118 (274 aa).

An N-terminal signal peptide occupies residues M1 to A21.

It localises to the cell outer membrane. The sequence is that of Putative outer membrane protein CPn_1073/CP_0776/CPj1073/CpB1118 from Chlamydia pneumoniae (Chlamydophila pneumoniae).